A 911-amino-acid chain; its full sequence is Facilitated trehalose transporter Tret1 (911 aa).

The tract at residues M1–T256 is disordered. At M1–Y446 the chain is on the cytoplasmic side. The span at G8–G19 shows a compositional bias: gly residues. The span at K32 to E50 shows a compositional bias: basic and acidic residues. 3 stretches are compositionally biased toward low complexity: residues S51 to T64, A76 to R129, and Q156 to Q166. Phosphoserine is present on residues S302, S303, and S304. Positions V334–I355 are disordered. Phosphoserine is present on residues S374 and S376. Positions F380 to R402 are disordered. Residues R384 to T395 are compositionally biased toward polar residues. Residues I447–A467 traverse the membrane as a helical segment. At S468–S494 the chain is on the extracellular side. N-linked (GlcNAc...) asparagine glycosylation is present at N482. Residues W495–I515 form a helical membrane-spanning segment. At E516–T527 the chain is on the cytoplasmic side. A helical transmembrane segment spans residues A528–L548. The Extracellular portion of the chain corresponds to C549–R551. Residues F552–T572 traverse the membrane as a helical segment. The Cytoplasmic portion of the chain corresponds to V573 to R578. The helical transmembrane segment at G579–A599 threads the bilayer. Residues G600 to S606 lie on the Extracellular side of the membrane. The helical transmembrane segment at M607 to P627 threads the bilayer. At E628–P690 the chain is on the cytoplasmic side. The helical transmembrane segment at L691–F711 threads the bilayer. At Y712–N727 the chain is on the extracellular side. A helical membrane pass occupies residues V728–I748. At D749–K754 the chain is on the cytoplasmic side. A helical transmembrane segment spans residues V755–F775. The Extracellular segment spans residues Y776–C794. Residues F795–G815 form a helical membrane-spanning segment. The Cytoplasmic segment spans residues E816–K821. A helical transmembrane segment spans residues I822–T842. At K843–H855 the chain is on the extracellular side. A helical transmembrane segment spans residues G856 to V876. At P877–M911 the chain is on the cytoplasmic side. Phosphoserine occurs at positions 899 and 900.

Belongs to the major facilitator superfamily. Sugar transporter (TC 2.A.1.1) family. Trehalose transporter subfamily.

The protein localises to the cell membrane. Its function is as follows. Low-capacity facilitative transporter for trehalose. Does not transport maltose, sucrose or lactose. Mediates the bidirectional transfer of trehalose. Responsible for the transport of trehalose synthesized in the fat body and the incorporation of trehalose into other tissues that require a carbon source, thereby regulating trehalose levels in the hemolymph. This chain is Facilitated trehalose transporter Tret1, found in Drosophila virilis (Fruit fly).